The chain runs to 107 residues: Iron-binding protein IscA (107 aa).

Residues Cys-35, Cys-99, and Cys-101 each contribute to the Fe cation site.

It belongs to the HesB/IscA family. In terms of assembly, homodimer; may form tetramers and higher multimers. Requires Fe cation as cofactor.

Its function is as follows. Is able to transfer iron-sulfur clusters to apo-ferredoxin. Multiple cycles of [2Fe2S] cluster formation and transfer are observed, suggesting that IscA acts catalytically. Recruits intracellular free iron so as to provide iron for the assembly of transient iron-sulfur cluster in IscU in the presence of IscS, L-cysteine and the thioredoxin reductase system TrxA/TrxB. This chain is Iron-binding protein IscA, found in Pectobacterium carotovorum subsp. carotovorum (strain PC1).